A 136-amino-acid polypeptide reads, in one-letter code: Transcription antitermination protein NusB (136 aa).

Belongs to the NusB family.

Functionally, involved in transcription antitermination. Required for transcription of ribosomal RNA (rRNA) genes. Binds specifically to the boxA antiterminator sequence of the ribosomal RNA (rrn) operons. The sequence is that of Transcription antitermination protein NusB from Pseudarthrobacter chlorophenolicus (strain ATCC 700700 / DSM 12829 / CIP 107037 / JCM 12360 / KCTC 9906 / NCIMB 13794 / A6) (Arthrobacter chlorophenolicus).